The chain runs to 224 residues: Peptidyl-prolyl cis-trans isomerase FKBP3 (224 aa).

Alanine 2 bears the N-acetylalanine mark. Serine 36 bears the Phosphoserine mark. A compositionally biased stretch (basic and acidic residues) spans 89-102; the sequence is KLNEDKPKETKSEE. Residues 89–113 form a disordered region; sequence KLNEDKPKETKSEETLDEGPPKYTK. At lysine 99 the chain carries N6-acetyllysine. The 97-residue stretch at 128 to 224 folds into the PPIase FKBP-type domain; sequence GDVVHCWYTG…IFEVELVDID (97 aa). A Phosphoserine modification is found at serine 152. Lysine 170 is subject to N6-acetyllysine.

It belongs to the FKBP-type PPIase family.

The protein localises to the nucleus. The enzyme catalyses [protein]-peptidylproline (omega=180) = [protein]-peptidylproline (omega=0). Its activity is regulated as follows. Inhibited preferentially by rapamycin over FK506. Functionally, FK506- and rapamycin-binding proteins (FKBPs) constitute a family of receptors for the two immunosuppressants which inhibit T-cell proliferation by arresting two dinstinct cytoplasmic signal transmission pathways. PPIases accelerate the folding of proteins. This is Peptidyl-prolyl cis-trans isomerase FKBP3 (FKBP3) from Bos taurus (Bovine).